The primary structure comprises 304 residues: Ornithine carbamoyltransferase (304 aa).

Residues 47 to 50 (STRT), Arg-98, and 125 to 128 (HPCQ) each bind carbamoyl phosphate. Residues Asn-156, Asp-221, and 225–226 (SM) contribute to the L-ornithine site. Carbamoyl phosphate is bound by residues 262–263 (CL) and Arg-290.

Belongs to the aspartate/ornithine carbamoyltransferase superfamily. OTCase family.

It localises to the cytoplasm. The enzyme catalyses carbamoyl phosphate + L-ornithine = L-citrulline + phosphate + H(+). It participates in amino-acid biosynthesis; L-arginine biosynthesis; L-arginine from L-ornithine and carbamoyl phosphate: step 1/3. Reversibly catalyzes the transfer of the carbamoyl group from carbamoyl phosphate (CP) to the N(epsilon) atom of ornithine (ORN) to produce L-citrulline. The polypeptide is Ornithine carbamoyltransferase (Methanococcus maripaludis (strain C5 / ATCC BAA-1333)).